The primary structure comprises 285 residues: MATARQGENTISPEAIPSNLPSRPTVLVFDSGVGGLSVYDEIRQLLPDLHYIYAFDNEAFPYGEKSQQFIIERVVEIVNAVQLRHQLALVVIACNTASTISLPALRERFTFPVVGVVPAVKPAAKLTRNGVVGLLATRATVQRPYTHELIARFATDCQILSLGSSELVELAEAKLQGETISISELQKILRPWLRLPEPPDTVVLGCTHFPLLAEELKAALPDGTRLVDSGAAIARRTAWLIANLDNPPLSTDKNLVYCLAITPKVATLWPILQRYGFDSLEKLPL.

Residues 30–31 (DS) and 62–63 (YG) contribute to the substrate site. Cys-94 serves as the catalytic Proton donor/acceptor. Residue 95–96 (NT) participates in substrate binding. The Proton donor/acceptor role is filled by Cys-206. Residue 207–208 (TH) coordinates substrate.

This sequence belongs to the aspartate/glutamate racemases family.

The catalysed reaction is L-glutamate = D-glutamate. It functions in the pathway cell wall biogenesis; peptidoglycan biosynthesis. Functionally, provides the (R)-glutamate required for cell wall biosynthesis. This chain is Glutamate racemase, found in Pectobacterium carotovorum subsp. carotovorum (strain PC1).